A 225-amino-acid chain; its full sequence is 7-cyano-7-deazaguanine synthase (225 aa).

10-20 lines the ATP pocket; that stretch reads VSGGLDSTTVI. 4 residues coordinate Zn(2+): cysteine 189, cysteine 199, cysteine 202, and cysteine 205.

The protein belongs to the QueC family. The cofactor is Zn(2+).

The catalysed reaction is 7-carboxy-7-deazaguanine + NH4(+) + ATP = 7-cyano-7-deazaguanine + ADP + phosphate + H2O + H(+). It participates in purine metabolism; 7-cyano-7-deazaguanine biosynthesis. In terms of biological role, catalyzes the ATP-dependent conversion of 7-carboxy-7-deazaguanine (CDG) to 7-cyano-7-deazaguanine (preQ(0)). The polypeptide is 7-cyano-7-deazaguanine synthase (Cellvibrio japonicus (strain Ueda107) (Pseudomonas fluorescens subsp. cellulosa)).